Reading from the N-terminus, the 256-residue chain is Pimeloyl-[acyl-carrier protein] methyl ester esterase (256 aa).

Positions 15-242 (HLVLLHGWGL…AAHAPFISHP (228 aa)) constitute an AB hydrolase-1 domain. Substrate contacts are provided by residues tryptophan 22, 82 to 83 (SL), and 143 to 147 (FLALQ). Catalysis depends on serine 82, which acts as the Nucleophile. Catalysis depends on residues aspartate 207 and histidine 235. Residue histidine 235 coordinates substrate.

It belongs to the AB hydrolase superfamily. Carboxylesterase BioH family. As to quaternary structure, monomer.

It is found in the cytoplasm. It catalyses the reaction 6-carboxyhexanoyl-[ACP] methyl ester + H2O = 6-carboxyhexanoyl-[ACP] + methanol + H(+). Its pathway is cofactor biosynthesis; biotin biosynthesis. In terms of biological role, the physiological role of BioH is to remove the methyl group introduced by BioC when the pimeloyl moiety is complete. It allows to synthesize pimeloyl-ACP via the fatty acid synthetic pathway through the hydrolysis of the ester bonds of pimeloyl-ACP esters. The protein is Pimeloyl-[acyl-carrier protein] methyl ester esterase of Salmonella agona (strain SL483).